Reading from the N-terminus, the 127-residue chain is Large ribosomal subunit protein eL24 (127 aa).

The interval 93 to 127 (KRAQKPEVKQAAAEQAKREIKEKKKAAAKKAAPKK) is disordered. Over residues 115–127 (KKKAAAKKAAPKK) the composition is skewed to basic residues.

This sequence belongs to the eukaryotic ribosomal protein eL24 family.

This is Large ribosomal subunit protein eL24 (rpl24) from Dictyostelium discoideum (Social amoeba).